The following is an 805-amino-acid chain: MAERVLTRVHSLRERVDATLAAHRNEILLFLSRIESHGKGILKPHELLAEFDAIRQDDKNKLNEHAFEELLKSTQEAIVLPPWVALAIRLRPGVWEYIRVNVNALVVEELSVPEYLQFKEELVDGASNGNFVLELDFEPFTASFPKPTLTKSIGNGVEFLNRHLSAKMFHDKESMTPLLEFLRAHHYKGKTMMLNDRIQNSNTLQNVLRKAEEYLIMLPPETPYFEFEHKFQEIGLEKGWGDTAERVLEMVCMLLDLLEAPDSCTLEKFLGRIPMVFNVVILSPHGYFAQENVLGYPDTGGQVVYILDQVPALEREMLKRIKEQGLDIIPRILIVTRLLPDAVGTTCGQRIEKVYGAEHSHILRVPFRTEKGIVRKWISRFEVWPYMETFIEDVAKEISAELQAKPDLIIGNYSEGNLAASLLAHKLGVTQCTIAHALEKTKYPDSDIYWKKFDEKYHFSSQFTADLIAMNHTDFIITSTFQEIAGSKDTVGQYESHMAFTMPGLYRVVHGINVFDPKFNIVSPGADINLYFSYSETEKRLTAFHPEIDELLYSDVENDEHLCVLKDRTKPILFTMARLDRVKNLTGLVEWYAKNPRLRGLVNLVVVGGDRRKESKDLEEQAEMKKMYELIETHNLNGQFRWISSQMNRVRNGELYRYIADTKGAFVQPAFYEAFGLTVVEAMTCGLPTFATNHGGPAEIIVHGKSGFHIDPYHGEQAADLLADFFEKCKKDPSHWETISMGGLKRIEEKYTWQIYSESLLTLAAVYGFWKHVSKLDRLEIRRYLEMFYALKYRKMAEAVPLAAE.

The tract at residues 275–752 (MVFNVVILSP…GLKRIEEKYT (478 aa)) is GT-B glycosyltransferase.

It belongs to the glycosyltransferase 1 family. Plant sucrose synthase subfamily. In terms of tissue distribution, expression is at least 10-fold higher in tubers compared to photosynthetically active tissues.

The catalysed reaction is an NDP-alpha-D-glucose + D-fructose = a ribonucleoside 5'-diphosphate + sucrose + H(+). In terms of biological role, sucrose-cleaving enzyme that provides UDP-glucose and fructose for various metabolic pathways. This chain is Sucrose synthase, found in Solanum tuberosum (Potato).